We begin with the raw amino-acid sequence, 265 residues long: Putative cysteine-rich receptor-like protein kinase 9 (265 aa).

An N-terminal signal peptide occupies residues methionine 1–alanine 23. 2 Gnk2-homologous domains span residues phenylalanine 27–isoleucine 131 and phenylalanine 142–phenylalanine 244. N-linked (GlcNAc...) asparagine glycans are attached at residues asparagine 35, asparagine 60, asparagine 69, asparagine 153, asparagine 177, and asparagine 246.

The protein belongs to the protein kinase superfamily. Ser/Thr protein kinase family. CRK subfamily.

Its subcellular location is the secreted. The chain is Putative cysteine-rich receptor-like protein kinase 9 (CRK9) from Arabidopsis thaliana (Mouse-ear cress).